The sequence spans 208 residues: Large ribosomal subunit protein uL3 (208 aa).

The tract at residues glycine 130–serine 168 is disordered.

This sequence belongs to the universal ribosomal protein uL3 family. Part of the 50S ribosomal subunit. Forms a cluster with proteins L14 and L19.

Functionally, one of the primary rRNA binding proteins, it binds directly near the 3'-end of the 23S rRNA, where it nucleates assembly of the 50S subunit. The chain is Large ribosomal subunit protein uL3 from Chloroherpeton thalassium (strain ATCC 35110 / GB-78).